Reading from the N-terminus, the 493-residue chain is UDP-N-acetylmuramoyl-L-alanyl-D-glutamate--2,6-diaminopimelate ligase (493 aa).

Residue Ser31 coordinates UDP-N-acetyl-alpha-D-muramoyl-L-alanyl-D-glutamate. 111-117 serves as a coordination point for ATP; sequence GTNGKTT. UDP-N-acetyl-alpha-D-muramoyl-L-alanyl-D-glutamate is bound by residues Asn152, 153-154, Ser180, and Arg188; that span reads TT. Lys220 carries the N6-carboxylysine modification. Residues Arg386, 410–413, Gly462, and Glu466 each bind meso-2,6-diaminopimelate; that span reads DNPR. Residues 410 to 413 carry the Meso-diaminopimelate recognition motif motif; the sequence is DNPR.

Belongs to the MurCDEF family. MurE subfamily. Mg(2+) is required as a cofactor. Post-translationally, carboxylation is probably crucial for Mg(2+) binding and, consequently, for the gamma-phosphate positioning of ATP.

It is found in the cytoplasm. It carries out the reaction UDP-N-acetyl-alpha-D-muramoyl-L-alanyl-D-glutamate + meso-2,6-diaminopimelate + ATP = UDP-N-acetyl-alpha-D-muramoyl-L-alanyl-gamma-D-glutamyl-meso-2,6-diaminopimelate + ADP + phosphate + H(+). It functions in the pathway cell wall biogenesis; peptidoglycan biosynthesis. Its function is as follows. Catalyzes the addition of meso-diaminopimelic acid to the nucleotide precursor UDP-N-acetylmuramoyl-L-alanyl-D-glutamate (UMAG) in the biosynthesis of bacterial cell-wall peptidoglycan. The sequence is that of UDP-N-acetylmuramoyl-L-alanyl-D-glutamate--2,6-diaminopimelate ligase (murE1) from Oceanobacillus iheyensis (strain DSM 14371 / CIP 107618 / JCM 11309 / KCTC 3954 / HTE831).